We begin with the raw amino-acid sequence, 133 residues long: Small ribosomal subunit protein uS8 (133 aa).

It belongs to the universal ribosomal protein uS8 family. Part of the 30S ribosomal subunit. Contacts proteins S5 and S12.

In terms of biological role, one of the primary rRNA binding proteins, it binds directly to 16S rRNA central domain where it helps coordinate assembly of the platform of the 30S subunit. This chain is Small ribosomal subunit protein uS8, found in Rippkaea orientalis (strain PCC 8801 / RF-1) (Cyanothece sp. (strain PCC 8801)).